We begin with the raw amino-acid sequence, 146 residues long: Acidic phospholipase A2 S8-51 (146 aa).

The first 19 residues, 1-19, serve as a signal peptide directing secretion; that stretch reads MYPAHLLVLLAVCVSLLGA. Positions 20–27 are excised as a propeptide; sequence ASIPPQPL. 7 cysteine pairs are disulfide-bonded: cysteine 38–cysteine 98, cysteine 54–cysteine 145, cysteine 56–cysteine 72, cysteine 71–cysteine 126, cysteine 78–cysteine 119, cysteine 87–cysteine 112, and cysteine 105–cysteine 117. Ca(2+) contacts are provided by tyrosine 55, glycine 57, and glycine 59. Histidine 75 is an active-site residue. Residue aspartate 76 participates in Ca(2+) binding. Residue aspartate 120 is part of the active site.

Belongs to the phospholipase A2 family. Group I subfamily. D49 sub-subfamily. Ca(2+) serves as cofactor. Expressed by the venom gland.

Its subcellular location is the secreted. The catalysed reaction is a 1,2-diacyl-sn-glycero-3-phosphocholine + H2O = a 1-acyl-sn-glycero-3-phosphocholine + a fatty acid + H(+). Its function is as follows. Snake venom phospholipase A2 (PLA2) that inhibits collagen-induced platelet aggregation. PLA2 catalyzes the calcium-dependent hydrolysis of the 2-acyl groups in 3-sn-phosphoglycerides. In Austrelaps superbus (Lowland copperhead snake), this protein is Acidic phospholipase A2 S8-51.